Reading from the N-terminus, the 333-residue chain is Tetraacyldisaccharide 4'-kinase (333 aa).

60–67 (TVGGTGKT) lines the ATP pocket.

The protein belongs to the LpxK family.

It catalyses the reaction a lipid A disaccharide + ATP = a lipid IVA + ADP + H(+). It participates in glycolipid biosynthesis; lipid IV(A) biosynthesis; lipid IV(A) from (3R)-3-hydroxytetradecanoyl-[acyl-carrier-protein] and UDP-N-acetyl-alpha-D-glucosamine: step 6/6. In terms of biological role, transfers the gamma-phosphate of ATP to the 4'-position of a tetraacyldisaccharide 1-phosphate intermediate (termed DS-1-P) to form tetraacyldisaccharide 1,4'-bis-phosphate (lipid IVA). This chain is Tetraacyldisaccharide 4'-kinase, found in Pseudomonas putida (strain ATCC 700007 / DSM 6899 / JCM 31910 / BCRC 17059 / LMG 24140 / F1).